The following is a 521-amino-acid chain: Cyclic AMP-responsive element-binding protein 3-like protein 2 (521 aa).

The Cytoplasmic segment spans residues 1–378 (MEVLESGEQS…CKLAGTQTGT (378 aa)). The span at 83 to 103 (YSLSEEPRTQSPFTHAATSDS) shows a compositional bias: polar residues. Residues 83 to 106 (YSLSEEPRTQSPFTHAATSDSFND) form a disordered region. Phosphoserine is present on serine 93. A Glycyl lysine isopeptide (Lys-Gly) (interchain with G-Cter in SUMO2) cross-link involves residue lysine 178. At serine 191 the chain carries Phosphoserine. The interval 196–264 (SVDQLHLPPT…PHKLQGSGPL (69 aa)) is disordered. Over residues 208 to 220 (SSHSSDSEGSLSP) the composition is skewed to low complexity. Positions 294 to 357 (ALKKIRRKIK…RTLLQQLQKL (64 aa)) constitute a bZIP domain. Positions 296 to 325 (KKIRRKIKNKISAQESRRKKKEYMDSLEKK) are basic motif. Residues 336 to 357 (LRKKVEVLENTNRTLLQQLQKL) are leucine-zipper. A helical; Signal-anchor for type II membrane protein membrane pass occupies residues 379-399 (CLMVVVLCFAVAFGSFFQGYG). The Lumenal segment spans residues 400–521 (PYPSATKMAL…ELERRVNATF (122 aa)). The short motif at 427–430 (RNLL) is the S1P recognition element. N-linked (GlcNAc...) asparagine glycans are attached at residues asparagine 481, asparagine 505, and asparagine 518.

This sequence belongs to the bZIP family. ATF subfamily. As to quaternary structure, binds DNA as a dimer. Post-translationally, upon ER stress, translocated to the Golgi apparatus, where it is processed by regulated intramembrane proteolysis (RIP) to release the cytosol-facing N-terminal transcription factor domain. The cleavage is performed sequentially by site-1 and site-2 proteases (S1P/MBTPS1 and S2P/MBTPS2). N-glycosylated. In terms of processing, ubiquitinated by HRD1/SYVN1; undergoes 'Lys-48'-linked ubiquitination, followed by rapid proteasomal degradation under normal conditions. Upon ER stress, SYVN1 E3 ubiquitin-protein ligase dissociates from its substrate, ubiquitination does not occur and CREB3L2 is stabilized. As to expression, widely expressed, including in lung, bladder, ovary, testis and spleen. Highly expressed in chondrocytes.

It is found in the endoplasmic reticulum membrane. It localises to the nucleus. Its function is as follows. Transcription factor involved in unfolded protein response (UPR). In the absence of endoplasmic reticulum (ER) stress, inserted into ER membranes, with N-terminal DNA-binding and transcription activation domains oriented toward the cytosolic face of the membrane. In response to ER stress, transported to the Golgi, where it is cleaved in a site-specific manner by resident proteases S1P/MBTPS1 and S2P/MBTPS2. The released N-terminal cytosolic domain is translocated to the nucleus to effect transcription of specific target genes. Plays a critical role in chondrogenesis by activating the transcription of SEC23A, which promotes the transport and secretion of cartilage matrix proteins, and possibly that of ER biogenesis-related genes. In a neuroblastoma cell line, protects cells from ER stress-induced death. In vitro activates transcription of target genes via direct binding to the CRE site. The protein is Cyclic AMP-responsive element-binding protein 3-like protein 2 (Creb3l2) of Mus musculus (Mouse).